We begin with the raw amino-acid sequence, 386 residues long: Branched-chain-amino-acid aminotransferase, cytosolic (386 aa).

The residue at position 1 (Met-1) is an N-acetylmethionine. N6-(pyridoxal phosphate)lysine is present on Lys-222.

Belongs to the class-IV pyridoxal-phosphate-dependent aminotransferase family. In terms of assembly, homodimer. The cofactor is pyridoxal 5'-phosphate. In terms of tissue distribution, expressed in brain and kidney. Overexpressed in MYC-induced brain tumors, lymphomas, as well as in a teratocarcinoma cell line.

It is found in the cytoplasm. It carries out the reaction L-leucine + 2-oxoglutarate = 4-methyl-2-oxopentanoate + L-glutamate. The enzyme catalyses L-isoleucine + 2-oxoglutarate = (S)-3-methyl-2-oxopentanoate + L-glutamate. The catalysed reaction is L-valine + 2-oxoglutarate = 3-methyl-2-oxobutanoate + L-glutamate. Functionally, catalyzes the first reaction in the catabolism of the essential branched chain amino acids leucine, isoleucine, and valine. In Mus musculus (Mouse), this protein is Branched-chain-amino-acid aminotransferase, cytosolic (Bcat1).